The primary structure comprises 454 residues: Zeatin O-xylosyltransferase (454 aa).

It belongs to the UDP-glycosyltransferase family. High level in young seeds, less in older seeds and very low in roots.

The catalysed reaction is zeatin + UDP-alpha-D-xylose = O-beta-D-xylosylzeatin + UDP + H(+). Utilizes UDP-xylose as the sugar donor and catalyzes the formation of o-xylosylzeatin from zeatin. Does not act on UDP-glucose. This chain is Zeatin O-xylosyltransferase, found in Phaseolus vulgaris (Kidney bean).